Consider the following 270-residue polypeptide: Diaminopimelate epimerase (270 aa).

Positions 15, 49, and 66 each coordinate substrate. Catalysis depends on Cys75, which acts as the Proton donor. Substrate is bound by residues 76–77, Asn155, Asn187, and 204–205; these read GN and ER. Cys213 acts as the Proton acceptor in catalysis. 214–215 provides a ligand contact to substrate; it reads GS.

Belongs to the diaminopimelate epimerase family. Homodimer.

Its subcellular location is the cytoplasm. The enzyme catalyses (2S,6S)-2,6-diaminopimelate = meso-2,6-diaminopimelate. Its pathway is amino-acid biosynthesis; L-lysine biosynthesis via DAP pathway; DL-2,6-diaminopimelate from LL-2,6-diaminopimelate: step 1/1. In terms of biological role, catalyzes the stereoinversion of LL-2,6-diaminopimelate (L,L-DAP) to meso-diaminopimelate (meso-DAP), a precursor of L-lysine and an essential component of the bacterial peptidoglycan. The protein is Diaminopimelate epimerase of Rickettsia prowazekii (strain Madrid E).